Here is a 211-residue protein sequence, read N- to C-terminus: Leucyl/phenylalanyl-tRNA--protein transferase (211 aa).

This sequence belongs to the L/F-transferase family.

The protein resides in the cytoplasm. The catalysed reaction is N-terminal L-lysyl-[protein] + L-leucyl-tRNA(Leu) = N-terminal L-leucyl-L-lysyl-[protein] + tRNA(Leu) + H(+). It catalyses the reaction N-terminal L-arginyl-[protein] + L-leucyl-tRNA(Leu) = N-terminal L-leucyl-L-arginyl-[protein] + tRNA(Leu) + H(+). The enzyme catalyses L-phenylalanyl-tRNA(Phe) + an N-terminal L-alpha-aminoacyl-[protein] = an N-terminal L-phenylalanyl-L-alpha-aminoacyl-[protein] + tRNA(Phe). Functionally, functions in the N-end rule pathway of protein degradation where it conjugates Leu, Phe and, less efficiently, Met from aminoacyl-tRNAs to the N-termini of proteins containing an N-terminal arginine or lysine. This Flavobacterium psychrophilum (strain ATCC 49511 / DSM 21280 / CIP 103535 / JIP02/86) protein is Leucyl/phenylalanyl-tRNA--protein transferase.